Here is a 75-residue protein sequence, read N- to C-terminus: DNA-directed RNA polymerase subunit omega (75 aa).

Belongs to the RNA polymerase subunit omega family. In terms of assembly, in cyanobacteria the RNAP catalytic core is composed of 2 alpha, 1 beta, 1 beta', 1 gamma and 1 omega subunit. When a sigma factor is associated with the core the holoenzyme is formed, which can initiate transcription.

The catalysed reaction is RNA(n) + a ribonucleoside 5'-triphosphate = RNA(n+1) + diphosphate. Its function is as follows. Promotes RNA polymerase assembly. Latches the N- and C-terminal regions of the beta' subunit thereby facilitating its interaction with the beta and alpha subunits. The chain is DNA-directed RNA polymerase subunit omega from Synechococcus sp. (strain CC9311).